The sequence spans 63 residues: Large ribosomal subunit protein bL28 (63 aa).

This sequence belongs to the bacterial ribosomal protein bL28 family.

This Treponema denticola (strain ATCC 35405 / DSM 14222 / CIP 103919 / JCM 8153 / KCTC 15104) protein is Large ribosomal subunit protein bL28.